We begin with the raw amino-acid sequence, 258 residues long: tRNA pseudouridine synthase A (258 aa).

Catalysis depends on Asp-52, which acts as the Nucleophile. Tyr-110 contacts substrate.

The protein belongs to the tRNA pseudouridine synthase TruA family. In terms of assembly, homodimer.

It carries out the reaction uridine(38/39/40) in tRNA = pseudouridine(38/39/40) in tRNA. Formation of pseudouridine at positions 38, 39 and 40 in the anticodon stem and loop of transfer RNAs. The polypeptide is tRNA pseudouridine synthase A (Francisella tularensis subsp. novicida (strain U112)).